A 422-amino-acid chain; its full sequence is Telomerase-associated protein of 50 kDa (422 aa).

As to quaternary structure, component of the telomerase holoenzyme complex, composed of the catalytic core (the catalytic subunit TERT, the telomerase RNA template component TER and TAP65/p65), which is associated with two heterotrimeric subcomplexes: (i) the replication protein A (RPA)-related subcomplex, composed of TEB1, RPA2/TEB2 and RPA3/TEB3 and (ii) the CST-like subcomplex, composed of TAP75/p75, TAP45/p45 and TAP19/p19. TEB1 and the CST-like subcomplex are tethered to the catalytic core by TAP50/p50.

The protein resides in the chromosome. Its subcellular location is the telomere. Functionally, tethering component of the holoenzyme telomerase ribonucleoprotein (RNP) complex. Telomerase is an essential ribonucleoprotein enzyme that copies new telomeric repeats onto chromosome ends by repetitively synthesizing the short telomere-repeat sequence 5'-TTGGGG-3' using an RNA template component TER. In the telomerase holoenzyme complex, acts as a hub that anchors the two heterotrimeric subcomplexes with the catalytic core. The sequence is that of Telomerase-associated protein of 50 kDa from Tetrahymena thermophila (strain SB210).